We begin with the raw amino-acid sequence, 675 residues long: Probable metal-nicotianamine transporter YSL16 (675 aa).

Residues 1 to 11 are compositionally biased toward gly residues; the sequence is MDRHALGGGGA. The disordered stretch occupies residues 1 to 20; that stretch reads MDRHALGGGGALEIEKTPEA. The next 14 membrane-spanning stretches (helical) occupy residues 50–70, 73–93, 118–138, 162–182, 231–251, 283–303, 329–349, 393–413, 421–441, 453–473, 507–527, 567–587, 605–625, and 633–653; these read GMVA…KLSL, GLIP…LRGW, CAVA…LLGL, GIGW…LTLL, ISFL…CGFL, LVNL…WPLI, FICI…VIVV, MAYT…PVMF, VIIA…GTGL, IALF…AGLV, VGQV…FFLF, LQLC…RDFL, FLVG…VFLW, and AALL…IWTF.

This sequence belongs to the YSL (TC 2.A.67.2) family. Expressed in roots.

It localises to the membrane. May be involved in the transport of nicotianamine-chelated metals. The sequence is that of Probable metal-nicotianamine transporter YSL16 (YSL16) from Oryza sativa subsp. japonica (Rice).